The following is a 29-amino-acid chain: Trypsin inhibitor 1 (29 aa).

3 disulfide bridges follow: C3-C20, C10-C22, and C16-C28.

Belongs to the protease inhibitor I7 (squash-type serine protease inhibitor) family.

It localises to the secreted. In terms of biological role, inhibits trypsin. This is Trypsin inhibitor 1 from Luffa aegyptiaca (Sponge gourd).